The sequence spans 159 residues: 2-C-methyl-D-erythritol 2,4-cyclodiphosphate synthase (159 aa).

Positions 10 and 12 each coordinate a divalent metal cation. 4-CDP-2-C-methyl-D-erythritol 2-phosphate-binding positions include 10-12 (DVH) and 36-37 (HS). His44 is a binding site for a divalent metal cation. 4-CDP-2-C-methyl-D-erythritol 2-phosphate contacts are provided by residues 58–60 (DIG), 134–137 (TTSE), Phe141, and Arg144.

Belongs to the IspF family. In terms of assembly, homotrimer. The cofactor is a divalent metal cation.

The enzyme catalyses 4-CDP-2-C-methyl-D-erythritol 2-phosphate = 2-C-methyl-D-erythritol 2,4-cyclic diphosphate + CMP. It participates in isoprenoid biosynthesis; isopentenyl diphosphate biosynthesis via DXP pathway; isopentenyl diphosphate from 1-deoxy-D-xylulose 5-phosphate: step 4/6. Functionally, involved in the biosynthesis of isopentenyl diphosphate (IPP) and dimethylallyl diphosphate (DMAPP), two major building blocks of isoprenoid compounds. Catalyzes the conversion of 4-diphosphocytidyl-2-C-methyl-D-erythritol 2-phosphate (CDP-ME2P) to 2-C-methyl-D-erythritol 2,4-cyclodiphosphate (ME-CPP) with a corresponding release of cytidine 5-monophosphate (CMP). The protein is 2-C-methyl-D-erythritol 2,4-cyclodiphosphate synthase of Roseobacter denitrificans (strain ATCC 33942 / OCh 114) (Erythrobacter sp. (strain OCh 114)).